A 311-amino-acid polypeptide reads, in one-letter code: Probable cell division protein WhiA (311 aa).

A DNA-binding region (H-T-H motif) is located at residues 274–308 (SLKELGEMIPSGAISKSGINHRIRKINEFAEKLRE).

The protein belongs to the WhiA family.

Its function is as follows. Involved in cell division and chromosome segregation. The polypeptide is Probable cell division protein WhiA (Enterococcus faecalis (strain ATCC 700802 / V583)).